Reading from the N-terminus, the 330-residue chain is MKIAIDAMGGDHAPKAVVLGAMKAIKEYSDLHITLVGKEEEIRQYLTNEERITILHTDEKIEATDEPVRAVRRKKQASMVLAAQQVKEGKADACISAGSTGALMAAGLFVVGRMEGIERPALSPTMPTVGGEGFVMLDVGANVDAKPIHLYQYALMGSVYAEKVRGIKNPRVGLLNVGTEDGKGNDLSKQVFSMLKDAPIHFVGNVESRDLLQGVADVVVCDGFTGNVALKSLEGTALALFSMLKEQLMSSFTSKLAAAVLKPKLMTLKDKMDYSEYGGAALFGLKAPVIKAHGSSNDQSIFSAIRQTREMVAKEVIPTISSVMEKEPLR.

Belongs to the PlsX family. In terms of assembly, homodimer. Probably interacts with PlsY.

It localises to the cytoplasm. The enzyme catalyses a fatty acyl-[ACP] + phosphate = an acyl phosphate + holo-[ACP]. The protein operates within lipid metabolism; phospholipid metabolism. Functionally, catalyzes the reversible formation of acyl-phosphate (acyl-PO(4)) from acyl-[acyl-carrier-protein] (acyl-ACP). This enzyme utilizes acyl-ACP as fatty acyl donor, but not acyl-CoA. The polypeptide is Phosphate acyltransferase (Bacillus cytotoxicus (strain DSM 22905 / CIP 110041 / 391-98 / NVH 391-98)).